A 441-amino-acid chain; its full sequence is Zinc finger and BTB domain-containing protein 8A (441 aa).

A BTB domain is found at 24–92; that stretch reads CDCSILVEGK…VYSGKLSLTG (69 aa). The disordered stretch occupies residues 135–248; sequence LSDKDTGSNG…HVSQSEEQVQ (114 aa). A phosphoserine mark is found at Ser-161 and Ser-167. Residues Lys-178, Lys-182, and Lys-199 each participate in a glycyl lysine isopeptide (Lys-Gly) (interchain with G-Cter in SUMO2) cross-link. Basic and acidic residues-rich tracts occupy residues 198-208 and 227-242; these read AKHEQRKDPIK and GKGD…HVSQ. 2 C2H2-type zinc fingers span residues 282–304 and 310–333; these read FKCP…LRCH and YPCQ…RTIH. Lys-437 participates in a covalent cross-link: Glycyl lysine isopeptide (Lys-Gly) (interchain with G-Cter in SUMO2).

The protein localises to the nucleus. Its function is as follows. May be involved in transcriptional regulation. In Rattus norvegicus (Rat), this protein is Zinc finger and BTB domain-containing protein 8A (Zbtb8a).